Consider the following 338-residue polypeptide: Ketol-acid reductoisomerase (NADP(+)) (338 aa).

The KARI N-terminal Rossmann domain occupies 1-181; the sequence is MNVFYDKDAD…GGGRAGIIET (181 aa). NADP(+) is bound by residues 24-27, Arg-47, and Ser-52; that span reads YGSQ. The active site involves His-107. Position 133 (Gly-133) interacts with NADP(+). One can recognise a KARI C-terminal knotted domain in the interval 182-327; sequence NFREETETDL…AKLRAMMPWI (146 aa). The Mg(2+) site is built by Asp-190, Glu-194, Glu-226, and Glu-230. Residue Ser-251 participates in substrate binding.

Belongs to the ketol-acid reductoisomerase family. Mg(2+) is required as a cofactor.

The catalysed reaction is (2R)-2,3-dihydroxy-3-methylbutanoate + NADP(+) = (2S)-2-acetolactate + NADPH + H(+). It catalyses the reaction (2R,3R)-2,3-dihydroxy-3-methylpentanoate + NADP(+) = (S)-2-ethyl-2-hydroxy-3-oxobutanoate + NADPH + H(+). It functions in the pathway amino-acid biosynthesis; L-isoleucine biosynthesis; L-isoleucine from 2-oxobutanoate: step 2/4. It participates in amino-acid biosynthesis; L-valine biosynthesis; L-valine from pyruvate: step 2/4. Involved in the biosynthesis of branched-chain amino acids (BCAA). Catalyzes an alkyl-migration followed by a ketol-acid reduction of (S)-2-acetolactate (S2AL) to yield (R)-2,3-dihydroxy-isovalerate. In the isomerase reaction, S2AL is rearranged via a Mg-dependent methyl migration to produce 3-hydroxy-3-methyl-2-ketobutyrate (HMKB). In the reductase reaction, this 2-ketoacid undergoes a metal-dependent reduction by NADPH to yield (R)-2,3-dihydroxy-isovalerate. This chain is Ketol-acid reductoisomerase (NADP(+)), found in Burkholderia ambifaria (strain MC40-6).